The primary structure comprises 400 residues: MKAAGIIVEYNPFHNGHLYHLQKTKEITGADVVVAVMSGNFIQRGEPAIVNKWARTKMALLNGVDVVFELPFAYACNSAEVFAYGAISILNSLGVNWVVFGSEAGDISLLKKIAMHLAFEEDEFKKYLKIYLKEGHSFPKARELALKRVSKEDIEFLPNNILGVEYIKWILRTNSKIEPLTIKRVGSLYNDPNLGSGSFCSATAIRQNINNLELIRDKMPPFSYQVLMEEIESGRGPVSLNDFFEFFLYRAIVYKDFLKEQFDVKEGLENRFYKHIFSSSSLEDLLSKVKTKRYTLTRLQRILIHCLVDSKVNQKTLLSTKPYIRVLGFNSRGKRYLNSIKEKVKYITKLDSYIMKNPEYNSLLELEIRASQIHALKYKEYHKYLQLEFKQHPIYIPSRE.

ATP contacts are provided by residues isoleucine 7–histidine 20, glycine 101, asparagine 159, and arginine 184.

It belongs to the TmcAL family.

Its subcellular location is the cytoplasm. The catalysed reaction is cytidine(34) in elongator tRNA(Met) + acetate + ATP = N(4)-acetylcytidine(34) in elongator tRNA(Met) + AMP + diphosphate. In terms of biological role, catalyzes the formation of N(4)-acetylcytidine (ac(4)C) at the wobble position of elongator tRNA(Met), using acetate and ATP as substrates. First activates an acetate ion to form acetyladenylate (Ac-AMP) and then transfers the acetyl group to tRNA to form ac(4)C34. This Caldicellulosiruptor saccharolyticus (strain ATCC 43494 / DSM 8903 / Tp8T 6331) protein is tRNA(Met) cytidine acetate ligase.